A 464-amino-acid polypeptide reads, in one-letter code: UDP-glycosyltransferase 76F2 (464 aa).

UDP-alpha-D-glucose is bound by residues S279, 338 to 340, 355 to 363, and 377 to 380; these read VNQ, HCGWNSTIE, and FSDQ.

Belongs to the UDP-glycosyltransferase family.

This is UDP-glycosyltransferase 76F2 (UGT76F2) from Arabidopsis thaliana (Mouse-ear cress).